The primary structure comprises 142 residues: Galactose-6-phosphate isomerase subunit LacA (142 aa).

This sequence belongs to the LacAB/RpiB family. As to quaternary structure, heteromultimeric protein consisting of LacA and LacB.

The enzyme catalyses aldehydo-D-galactose 6-phosphate = keto-D-tagatose 6-phosphate. Its pathway is carbohydrate metabolism; D-galactose 6-phosphate degradation; D-tagatose 6-phosphate from D-galactose 6-phosphate: step 1/1. This is Galactose-6-phosphate isomerase subunit LacA from Staphylococcus epidermidis (strain ATCC 35984 / DSM 28319 / BCRC 17069 / CCUG 31568 / BM 3577 / RP62A).